Consider the following 281-residue polypeptide: MSNSRSILSQPEWRIVDQSSLGPTFHALQSFAMDDTLCTSIGKGESAATMRSWVHHNTIVLGIQDSRLPHLEEGISFLKENNFNVIVRNSGGLAVVLDEGVLNVSLLFQETEKGIDIDLGYDTMWHLIQEMLKDYDVTIEAKEIVGSYCPGSYDLSIRDQKFAGISQRRIRGGVAVQIYLCATGSGSERAALVRDFYNLAIQGEETRFTYPEIVPSTMASLSELLDETITVQDLMMRLLKTLQQFAPKLTPSQLTIDEIPLYETNLQRIIDRNNKALGLEK.

Residues 44 to 250 form the BPL/LPL catalytic domain; the sequence is GESAATMRSW…TLQQFAPKLT (207 aa). Cys149 functions as the Acyl-thioester intermediate in the catalytic mechanism.

It belongs to the octanoyltransferase LipL family.

The catalysed reaction is N(6)-octanoyl-L-lysyl-[glycine-cleavage complex H protein] + L-lysyl-[lipoyl-carrier protein] = N(6)-octanoyl-L-lysyl-[lipoyl-carrier protein] + L-lysyl-[glycine-cleavage complex H protein]. It functions in the pathway protein modification; protein lipoylation via endogenous pathway; protein N(6)-(lipoyl)lysine from octanoyl-[acyl-carrier-protein]. Functionally, catalyzes the amidotransfer (transamidation) of the octanoyl moiety from octanoyl-GcvH to the lipoyl domain of the E2 subunit of lipoate-dependent enzymes. The sequence is that of Octanoyl-[GcvH]:protein N-octanoyltransferase from Bacillus anthracis.